The primary structure comprises 340 residues: Ketol-acid reductoisomerase (NADP(+)) (340 aa).

Positions 3 to 182 constitute a KARI N-terminal Rossmann domain; that stretch reads VQMEYEKDVK…GAARVGLLET (180 aa). Residues 26-29, Arg-49, Ser-53, and 83-86 contribute to the NADP(+) site; these read YGSQ and DEIQ. His-108 is an active-site residue. Position 134 (Gly-134) interacts with NADP(+). Residues 183–328 form the KARI C-terminal knotted domain; sequence TYKEETEEDL…AELRKAMPFV (146 aa). The Mg(2+) site is built by Asp-191, Glu-195, Glu-227, and Glu-231. Ser-252 is a binding site for substrate.

The protein belongs to the ketol-acid reductoisomerase family. It depends on Mg(2+) as a cofactor.

The catalysed reaction is (2R)-2,3-dihydroxy-3-methylbutanoate + NADP(+) = (2S)-2-acetolactate + NADPH + H(+). It carries out the reaction (2R,3R)-2,3-dihydroxy-3-methylpentanoate + NADP(+) = (S)-2-ethyl-2-hydroxy-3-oxobutanoate + NADPH + H(+). The protein operates within amino-acid biosynthesis; L-isoleucine biosynthesis; L-isoleucine from 2-oxobutanoate: step 2/4. It participates in amino-acid biosynthesis; L-valine biosynthesis; L-valine from pyruvate: step 2/4. Functionally, involved in the biosynthesis of branched-chain amino acids (BCAA). Catalyzes an alkyl-migration followed by a ketol-acid reduction of (S)-2-acetolactate (S2AL) to yield (R)-2,3-dihydroxy-isovalerate. In the isomerase reaction, S2AL is rearranged via a Mg-dependent methyl migration to produce 3-hydroxy-3-methyl-2-ketobutyrate (HMKB). In the reductase reaction, this 2-ketoacid undergoes a metal-dependent reduction by NADPH to yield (R)-2,3-dihydroxy-isovalerate. The chain is Ketol-acid reductoisomerase (NADP(+)) from Streptococcus thermophilus (strain CNRZ 1066).